The sequence spans 186 residues: dCTP deaminase (186 aa).

K107–R112 provides a ligand contact to dCTP. E133 functions as the Proton donor/acceptor in the catalytic mechanism. The dCTP site is built by Q152, Y166, and Q176.

This sequence belongs to the dCTP deaminase family. As to quaternary structure, homotrimer.

It catalyses the reaction dCTP + H2O + H(+) = dUTP + NH4(+). Its pathway is pyrimidine metabolism; dUMP biosynthesis; dUMP from dCTP (dUTP route): step 1/2. Its function is as follows. Catalyzes the deamination of dCTP to dUTP. The chain is dCTP deaminase from Campylobacter jejuni subsp. jejuni serotype O:2 (strain ATCC 700819 / NCTC 11168).